A 321-amino-acid polypeptide reads, in one-letter code: D-alanine--D-alanine ligase (321 aa).

One can recognise an ATP-grasp domain in the interval 103–303 (KKILTPENIP…YVALCRMIVE (201 aa)). ATP is bound at residue 129–186 (PLPRPYVLKPVNEGSSVGVAIIDESFNDGQPIRKDQIDPWKNFKTLLAEPFIKGRELT). Residues Asp-254, Glu-270, and Asn-272 each contribute to the Mg(2+) site.

The protein belongs to the D-alanine--D-alanine ligase family. It depends on Mg(2+) as a cofactor. The cofactor is Mn(2+).

It is found in the cytoplasm. The catalysed reaction is 2 D-alanine + ATP = D-alanyl-D-alanine + ADP + phosphate + H(+). The protein operates within cell wall biogenesis; peptidoglycan biosynthesis. Cell wall formation. The sequence is that of D-alanine--D-alanine ligase from Zymomonas mobilis subsp. mobilis (strain ATCC 31821 / ZM4 / CP4).